We begin with the raw amino-acid sequence, 203 residues long: Probable GTP-binding protein EngB (203 aa).

The 176-residue stretch at 24–199 (DGSEVAFAGR…HTVIETWLGL (176 aa)) folds into the EngB-type G domain. Residues 32-39 (GRSNAGKS), 59-63 (GRTQQ), 77-80 (DLPG), 144-147 (TKAD), and 178-180 (FSS) contribute to the GTP site. Residues Ser39 and Thr61 each coordinate Mg(2+).

The protein belongs to the TRAFAC class TrmE-Era-EngA-EngB-Septin-like GTPase superfamily. EngB GTPase family. The cofactor is Mg(2+).

In terms of biological role, necessary for normal cell division and for the maintenance of normal septation. The protein is Probable GTP-binding protein EngB of Xylella fastidiosa (strain Temecula1 / ATCC 700964).